The primary structure comprises 477 residues: UDP-N-acetylmuramate--L-alanine ligase (477 aa).

Residue 122-128 (GTHGKTT) coordinates ATP.

This sequence belongs to the MurCDEF family.

The protein resides in the cytoplasm. It catalyses the reaction UDP-N-acetyl-alpha-D-muramate + L-alanine + ATP = UDP-N-acetyl-alpha-D-muramoyl-L-alanine + ADP + phosphate + H(+). The protein operates within cell wall biogenesis; peptidoglycan biosynthesis. Cell wall formation. This is UDP-N-acetylmuramate--L-alanine ligase from Xylella fastidiosa (strain M12).